The following is a 255-amino-acid chain: F-box only protein 44 (255 aa).

In terms of domain architecture, F-box spans 3–50; it reads VGNINELPENILLELFIHIPARQLLLRCRPVCSLWRDLIDLVTLWKRK. The FBA domain occupies 71 to 252; the sequence is FYFLRSLQRN…VTNSSITIGP (182 aa).

As to quaternary structure, part of a SCF (SKP1-cullin-F-box) protein ligase complex. Interacts with SKP1 and CUL1. As to expression, expressed in brain, liver, pancreas and adipose tissue (at protein level). Widely expressed.

Functionally, substrate-recognition component of the SCF (SKP1-CUL1-F-box protein)-type E3 ubiquitin ligase complex. The chain is F-box only protein 44 (Fbxo44) from Mus musculus (Mouse).